We begin with the raw amino-acid sequence, 185 residues long: Elongation factor P (185 aa).

It belongs to the elongation factor P family.

Its subcellular location is the cytoplasm. Its pathway is protein biosynthesis; polypeptide chain elongation. Its function is as follows. Involved in peptide bond synthesis. Stimulates efficient translation and peptide-bond synthesis on native or reconstituted 70S ribosomes in vitro. Probably functions indirectly by altering the affinity of the ribosome for aminoacyl-tRNA, thus increasing their reactivity as acceptors for peptidyl transferase. This Streptococcus equi subsp. equi (strain 4047) protein is Elongation factor P.